Consider the following 223-residue polypeptide: DNA mismatch repair protein MutH (223 aa).

It belongs to the MutH family.

It localises to the cytoplasm. In terms of biological role, sequence-specific endonuclease that cleaves unmethylated GATC sequences. It is involved in DNA mismatch repair. The chain is DNA mismatch repair protein MutH from Shewanella oneidensis (strain ATCC 700550 / JCM 31522 / CIP 106686 / LMG 19005 / NCIMB 14063 / MR-1).